Here is a 467-residue protein sequence, read N- to C-terminus: Serine/threonine-protein kinase US3 homolog (467 aa).

A disordered region spans residues 64–155 (GPEVAPPART…PAGGVTREEA (92 aa)). Over residues 99 to 111 (NERRAATGDEKES) the composition is skewed to basic and acidic residues. Residues 117-144 (NESESESESESESESGADDGDWDDDDDA) show a composition bias toward acidic residues. The Protein kinase domain occupies 164-462 (FRIIRRLTPG…AAELLEHPVF (299 aa)). Residues 170-178 (LTPGSEGRV) and Lys-194 contribute to the ATP site. The Proton acceptor role is filled by Asp-279.

This sequence belongs to the protein kinase superfamily. Ser/Thr protein kinase family. Post-translationally, phosphorylated by UL13 homolog; this phosphorylation regulates subsequent phosphorylation of UL31 and UL34 homologs by US3. Autophosphorylated.

The protein localises to the host cytoplasm. It localises to the host nucleus. The catalysed reaction is L-seryl-[protein] + ATP = O-phospho-L-seryl-[protein] + ADP + H(+). It carries out the reaction L-threonyl-[protein] + ATP = O-phospho-L-threonyl-[protein] + ADP + H(+). Its function is as follows. Multifunctional serine/threonine kinase that plays a role in several processes including egress of virus particles from the nucleus, modulation of the actin cytoskeleton and inhibition of apoptosis. Phosphorylates UL31 and UL34 homologs, two critical regulators of capsid budding from nucleus to endoplasmic reticulum, thereby facilitating virion egress. Modulates and redistributes host components of the nuclear envelope, including LMNA, emerin/EMD and the nuclear matrix protein MATR3. Phosphorylates envelope glycoprotein B (gB), probably to direct it to the cell surface. Promotes virus intracellular spread by restructuring host cell cytoskeleton. Blocks host apoptosis to extend cell survival and allow efficient viral replication. Promotes viral gene expression by phosphorylating host HDAC2 to reduce viral genome silencing. This is Serine/threonine-protein kinase US3 homolog from Bos taurus (Bovine).